The following is a 176-amino-acid chain: Crossover junction endodeoxyribonuclease RuvC (176 aa).

Active-site residues include Asp-7, Glu-68, and Asp-141. Mg(2+)-binding residues include Asp-7, Glu-68, and Asp-141.

This sequence belongs to the RuvC family. Homodimer which binds Holliday junction (HJ) DNA. The HJ becomes 2-fold symmetrical on binding to RuvC with unstacked arms; it has a different conformation from HJ DNA in complex with RuvA. In the full resolvosome a probable DNA-RuvA(4)-RuvB(12)-RuvC(2) complex forms which resolves the HJ. It depends on Mg(2+) as a cofactor.

The protein resides in the cytoplasm. The enzyme catalyses Endonucleolytic cleavage at a junction such as a reciprocal single-stranded crossover between two homologous DNA duplexes (Holliday junction).. In terms of biological role, the RuvA-RuvB-RuvC complex processes Holliday junction (HJ) DNA during genetic recombination and DNA repair. Endonuclease that resolves HJ intermediates. Cleaves cruciform DNA by making single-stranded nicks across the HJ at symmetrical positions within the homologous arms, yielding a 5'-phosphate and a 3'-hydroxyl group; requires a central core of homology in the junction. The consensus cleavage sequence is 5'-(A/T)TT(C/G)-3'. Cleavage occurs on the 3'-side of the TT dinucleotide at the point of strand exchange. HJ branch migration catalyzed by RuvA-RuvB allows RuvC to scan DNA until it finds its consensus sequence, where it cleaves and resolves the cruciform DNA. This chain is Crossover junction endodeoxyribonuclease RuvC, found in Streptomyces avermitilis (strain ATCC 31267 / DSM 46492 / JCM 5070 / NBRC 14893 / NCIMB 12804 / NRRL 8165 / MA-4680).